We begin with the raw amino-acid sequence, 182 residues long: Receptor activity-modifying protein 2 (182 aa).

Residues 1–45 (MAPLRVERAPGGSQLAVTSAQRPAALRLPPLLLLLLLLLLGAVST) form the signal peptide. Topologically, residues 46-150 (SPESLNQSHP…VQPTFSDPPE (105 aa)) are extracellular. N51, N92, and N137 each carry an N-linked (GlcNAc...) asparagine glycan. Disulfide bonds link C76–C106 and C91–C138. The chain crosses the membrane as a helical span at residues 151 to 172 (DVLLAMIIAPICLIPFLVTLVV). At 173–182 (WRSKDGDAQA) the chain is on the cytoplasmic side.

Belongs to the RAMP family. In terms of assembly, heterodimer of CALCRL and RAMP2; the interaction forms the receptor complex for adrenomedullin/ADM. Heterodimer of CALCR and RAMP2; interaction forms the AMYR2 receptor complex for calcitonin/CALC and amylin/IAPP.

It is found in the cell membrane. Accessory protein that interacts with and modulates the function of G-protein coupled receptors including calcitonin gene-related peptide type 1 receptor (CALCRL) and calcitonin receptor (CALCR). Required for the transport of CALCRL to the plasma membrane. Together with CALCRL, form a receptor complex for adrenomedullin/ADM. Together with CALCR, act as a receptor complex for calcitonin/CT/CALC. Together with CALCR, also act as a receptor complex for amylin/IAPP. This Rattus norvegicus (Rat) protein is Receptor activity-modifying protein 2.